The chain runs to 83 residues: Protein kreg-1 (83 aa).

The interval 62 to 83 (GHHHHHHGHHFGHHHHHHHGHH) is disordered.

In terms of tissue distribution, weakly expressed in the intestine, but expression is up-regulated in response to Cu(2+).

Functionally, plays a role in the stress response to heavy metals such as copper, probably in a fos-1/kgb-1-dependent manner. This Caenorhabditis elegans protein is Protein kreg-1.